A 466-amino-acid chain; its full sequence is Muscarinic acetylcholine receptor M2 (466 aa).

Topologically, residues 1–22 (MNNSTNSSNNSLALTSPYKTFE) are extracellular. N-linked (GlcNAc...) asparagine glycosylation is found at N2, N3, N6, and N9. A helical membrane pass occupies residues 23-45 (VVFIVLVAGSLSLVTIIGNILVM). The Cytoplasmic portion of the chain corresponds to 46-59 (VSIKVNRHLQTVNN). The chain crosses the membrane as a helical span at residues 60–80 (YFLFSLACADLIIGVFSMNLY). Topologically, residues 81–97 (TLYTVIGYWPLGPVVCD) are extracellular. An intrachain disulfide couples C96 to C176. A helical transmembrane segment spans residues 98–119 (LWLALDYVVSNASVMNLLIISF). The Important for signaling motif lies at 120 to 122 (DRY). The Cytoplasmic portion of the chain corresponds to 120–139 (DRYFCVTKPLTYPVKRTTKM). A helical membrane pass occupies residues 140-162 (AGMMIAAAWVLSFILWAPAILFW). Residues 163–184 (QFIVGVRTVEDGECYIQFFSNA) are Extracellular-facing. A helical membrane pass occupies residues 185-209 (AVTFGTAIAAFYLPVIIMTVLYWHI). The Cytoplasmic segment spans residues 210 to 387 (SRASKSRIKK…PPSREKKVTR (178 aa)). A disordered region spans residues 218-355 (KKDKKEPVAN…VVGSSGQNGD (138 aa)). S232 is modified (phosphoserine). Residues 254–270 (GLEHNKIQNGKAPRDPV) show a composition bias toward basic and acidic residues. Polar residues-rich tracts occupy residues 284-293 (NDSTSVSAVA), 304-313 (DENTVSTSLG), and 334-353 (SDSCTPTNTTVEVVGSSGQN). Residues 388–410 (TILAILLAFIITWAPYNVMVLIN) form a helical membrane-spanning segment. The Extracellular portion of the chain corresponds to 411-418 (TFCAPCIP). A disulfide bridge connects residues C413 and C416. Residues 419–442 (NTVWTIGYWLCYINSTINPACYAL) traverse the membrane as a helical segment. The Important for signaling signature appears at 436 to 440 (NPACY). Residues 443-466 (CNATFKKTFKHLLMCHYKNIGATR) lie on the Cytoplasmic side of the membrane. T446, T450, and T465 each carry phosphothreonine.

It belongs to the G-protein coupled receptor 1 family. Muscarinic acetylcholine receptor subfamily. CHRM2 sub-subfamily. Interacts with ARRB1 and ARRB2. Interacts with RACK1; the interaction regulates CHRM2 internalization. Post-translationally, phosphorylated in response to agonist treatment.

The protein localises to the cell membrane. The protein resides in the postsynaptic cell membrane. Functionally, the muscarinic acetylcholine receptor mediates various cellular responses, including inhibition of adenylate cyclase, breakdown of phosphoinositides and modulation of potassium channels through the action of G proteins. Primary transducing effect is adenylate cyclase inhibition. Signaling promotes phospholipase C activity, leading to the release of inositol trisphosphate (IP3); this then triggers calcium ion release into the cytosol. The chain is Muscarinic acetylcholine receptor M2 (CHRM2) from Homo sapiens (Human).